Here is a 92-residue protein sequence, read N- to C-terminus: Small ribosomal subunit protein bS20 (92 aa).

The tract at residues 1-24 (MANTTSAKKATRKIARRTDVNKAR) is disordered.

This sequence belongs to the bacterial ribosomal protein bS20 family.

Binds directly to 16S ribosomal RNA. The polypeptide is Small ribosomal subunit protein bS20 (Rhizobium etli (strain ATCC 51251 / DSM 11541 / JCM 21823 / NBRC 15573 / CFN 42)).